Reading from the N-terminus, the 184-residue chain is Photosystem I assembly protein Ycf4 (184 aa).

The next 2 helical transmembrane spans lie at 19 to 39 (ISNF…LLVG) and 57 to 77 (IIFF…LFIS).

This sequence belongs to the Ycf4 family.

It is found in the plastid. It localises to the chloroplast thylakoid membrane. Seems to be required for the assembly of the photosystem I complex. This chain is Photosystem I assembly protein Ycf4, found in Nicotiana sylvestris (Wood tobacco).